A 193-amino-acid chain; its full sequence is Ion-translocating oxidoreductase complex subunit A (193 aa).

The next 6 helical transmembrane spans lie at 5-25 (LLLF…FLGL), 39-59 (MGMG…AWLI), 63-83 (ILIP…VIAV), 102-122 (LLGI…VALL), 134-154 (ALYG…FTAI), and 171-191 (AIAL…SGLV).

This sequence belongs to the NqrDE/RnfAE family. In terms of assembly, the complex is composed of six subunits: RsxA, RsxB, RsxC, RsxD, RsxE and RsxG.

It is found in the cell inner membrane. In terms of biological role, part of a membrane-bound complex that couples electron transfer with translocation of ions across the membrane. Required to maintain the reduced state of SoxR. The polypeptide is Ion-translocating oxidoreductase complex subunit A (Shigella boydii serotype 4 (strain Sb227)).